A 106-amino-acid chain; its full sequence is uncharacterized protein (106 aa).

It localises to the mitochondrion. This is an uncharacterized protein from Arabidopsis thaliana (Mouse-ear cress).